The following is a 428-amino-acid chain: Putative aminotransferase MSMEG_6286/MSMEI_6121 (428 aa).

Position 37 (Gly-37) interacts with substrate. Residues Tyr-72, 102 to 105, Asn-191, 222 to 225, and 256 to 258 each bind pyridoxal 5'-phosphate; these read ASLE, AYAV, and STS. An Isoglutamyl lysine isopeptide (Lys-Gln) (interchain with Q-Cter in protein Pup) cross-link involves residue Lys-339.

Belongs to the class-I pyridoxal-phosphate-dependent aminotransferase family. The cofactor is pyridoxal 5'-phosphate.

The sequence is that of Putative aminotransferase MSMEG_6286/MSMEI_6121 from Mycolicibacterium smegmatis (strain ATCC 700084 / mc(2)155) (Mycobacterium smegmatis).